A 785-amino-acid polypeptide reads, in one-letter code: Rho GTPase-activating protein 10 (785 aa).

The BAR domain maps to 7–262 (EFSDCYLDSP…IRQNPKDHKR (256 aa)). In terms of domain architecture, PH spans 265 to 372 (QFTAEGYLYV…WLEVLGGKEA (108 aa)). In terms of domain architecture, Rho-GAP spans 389–574 (AQLDKMGFTI…ILIENHEKIF (186 aa)). The segment at 576–708 (TPPDATLPEP…PAVTPPSPKL (133 aa)) is disordered. Pro residues predominate over residues 584–595 (EPGPLSAPPNAP). Positions 598 to 608 (QSKRQGQRTKR) are enriched in basic residues. The segment covering 622 to 632 (GDRPSLPKEDT) has biased composition (basic and acidic residues). The span at 633–650 (PPSSLDSLSSPSPTTATA) shows a compositional bias: low complexity. Residues 675-697 (APSQARSSAVQWLNPQSPTTPSC) are compositionally biased toward polar residues. The region spanning 727-785 (IISRKARAVYPCEAEHSSELSFEIGAIFEDVQTSREPGWLEGTLNGKRGLIPQNYVKLL) is the SH3 domain.

In terms of assembly, interacts with PKN3. Interacts with caspase-activated PAK2 proteolytic fragment PAK-2p34; the interaction does not affect ARHGAP10 GTPase activation activity towards RHOA and CDC42. Interacts via its SH3 domain with PTK2/FAK1. Interacts with PTK2B/PYK2; the interaction negatively regulates ARHGAP10 GTPase-activating activity. Interacts with MICAL1 and WDR44; complex formation might transit from GRAF2/ARHGAP10-MICAL1 to GRAF2/ARHGAP10-WDR44 complexes.

The protein localises to the cytoplasm. It localises to the perinuclear region. It is found in the cell membrane. Its subcellular location is the endosome membrane. In terms of biological role, GTPase-activating protein that catalyzes the conversion of active GTP-bound Rho GTPases to their inactive GDP-bound form, thus suppressing various Rho GTPase-mediated cellular processes. Also converts Cdc42 to an inactive GDP-bound state. Essential for PTKB2 regulation of cytoskeletal organization via Rho family GTPases. Inhibits PAK2 proteolytic fragment PAK-2p34 kinase activity and changes its localization from the nucleus to the perinuclear region. Stabilizes PAK-2p34 thereby increasing stimulation of cell death. Associates with MICAL1 on the endosomal membrane to promote Rab8-Rab10-dependent tubule extension. After dissociation with MICAL1, recruits WDR44 which connects the endoplasmic reticulum (ER) with the endosomal tubule, thereby participating in the export of a subset of neosynthesized proteins. The chain is Rho GTPase-activating protein 10 (ARHGAP10) from Bos taurus (Bovine).